The primary structure comprises 148 residues: Macrodomain Ter protein (148 aa).

Belongs to the MatP family. As to quaternary structure, homodimer.

The protein resides in the cytoplasm. Functionally, required for spatial organization of the terminus region of the chromosome (Ter macrodomain) during the cell cycle. Prevents early segregation of duplicated Ter macrodomains during cell division. Binds specifically to matS, which is a 13 bp signature motif repeated within the Ter macrodomain. This chain is Macrodomain Ter protein, found in Haemophilus ducreyi (strain 35000HP / ATCC 700724).